The chain runs to 67 residues: Spiniferin (67 aa).

The N-terminal stretch at 1–23 (MKTQLAILLITLVLFQMFSQSDA) is a signal peptide. The residue at position 36 (leucine 36) is a Leucine amide. A propeptide spanning residues 40 to 67 (GLNDLSDLDELFDGEISKADLDFLREIM) is cleaved from the precursor.

Belongs to the non-disulfide-bridged peptide (NDBP) superfamily. Short antimicrobial peptide (group 4) family. In terms of tissue distribution, expressed by the venom gland.

It is found in the secreted. The protein localises to the target cell membrane. Alpha-helical and amphipathic peptide with weak antimicrobial activities against both Gram-positive (MIC=41 uM to &gt;82 uM) and Gram-negative (MIC&gt;82 uM) bacteria. It has extremely weak hemolytic activity against human erythrocytes. The protein is Spiniferin of Heterometrus spinifer (Asia giant forest scorpion).